Consider the following 955-residue polypeptide: Kinesin heavy chain isoform 5C (955 aa).

Residues Ser8 to Ile327 enclose the Kinesin motor domain. Positions 87, 89, 90, 91, 92, 93, 94, and 99 each coordinate ATP. Positions Val174–Lys315 are microtubule-binding. The stretch at Ser332–Glu366 forms a coiled coil. Thr403 bears the Phosphothreonine mark. Coiled-coil stretches lie at residues Lys413 to Leu538 and Ile590 to Ala913. Residues Cys859–Lys955 form a globular region. Residues Ala909–Lys955 form a disordered region.

The protein belongs to the TRAFAC class myosin-kinesin ATPase superfamily. Kinesin family. Kinesin subfamily. Oligomer composed of two heavy chains and two light chains. Interacts with GRIP1. Interacts with TRAK1. Interacts with ZFYVE27. Interacts with KLC3.

Its subcellular location is the cytoplasm. It localises to the cytoskeleton. The protein localises to the cell projection. The protein resides in the dendrite. The enzyme catalyses ATP + H2O = ADP + phosphate + H(+). Functionally, microtubule-associated force-producing protein that may play a role in organelle transport. Has ATPase activity. Involved in synaptic transmission. Mediates dendritic trafficking of mRNAs. Required for anterograde axonal transportation of MAPK8IP3/JIP3 which is essential for MAPK8IP3/JIP3 function in axon elongation. The protein is Kinesin heavy chain isoform 5C (Kif5c) of Rattus norvegicus (Rat).